The following is a 407-amino-acid chain: Deacetylase Atu3266 (407 aa).

The Zn(2+) site is built by His75, His77, Lys173, His206, His229, and Asp289. Lys173 carries the N6-carboxylysine modification.

Belongs to the metallo-dependent hydrolases superfamily. Atu3266/EF_0837 deacetylase family. Homohexamer, dimer of trimers. Zn(2+) serves as cofactor.

In terms of biological role, esterase that catalyzes the deacetylation of acetyl-(R)-mandelate (in vitro). Can also hydrolyze acetyl glycolate, but with lower efficiency. Has very low N-acetyl-D-amino acid deacetylase activity with N-acetyl-D-serine and N-acetyl-D-threonine (in vitro). Theoretical substrate docking studies suggest that other N-acetylated amino acids may optimally occupy the active site and may in fact be the physiological substrates. This chain is Deacetylase Atu3266, found in Agrobacterium fabrum (strain C58 / ATCC 33970) (Agrobacterium tumefaciens (strain C58)).